Reading from the N-terminus, the 179-residue chain is Ferric nitrobindin-like protein (179 aa).

Residues 17–23 (GRWEGLG) carry the GXWXGXG motif.

Belongs to the nitrobindin family.

This is Ferric nitrobindin-like protein from Thermobifida fusca (strain YX).